Here is a 141-residue protein sequence, read N- to C-terminus: Large ribosomal subunit protein uL11 (141 aa).

It belongs to the universal ribosomal protein uL11 family. In terms of assembly, part of the ribosomal stalk of the 50S ribosomal subunit. Interacts with L10 and the large rRNA to form the base of the stalk. L10 forms an elongated spine to which L12 dimers bind in a sequential fashion forming a multimeric L10(L12)X complex. Post-translationally, one or more lysine residues are methylated.

Functionally, forms part of the ribosomal stalk which helps the ribosome interact with GTP-bound translation factors. The protein is Large ribosomal subunit protein uL11 of Lactococcus lactis subsp. cremoris (strain MG1363).